The chain runs to 92 residues: DNA-directed RNA polymerase subunit Rpo11 (92 aa).

The protein belongs to the archaeal Rpo11/eukaryotic RPB11/RPC19 RNA polymerase subunit family. As to quaternary structure, part of the 13-subunit RNA polymerase complex.

Its subcellular location is the cytoplasm. The catalysed reaction is RNA(n) + a ribonucleoside 5'-triphosphate = RNA(n+1) + diphosphate. Its function is as follows. DNA-dependent RNA polymerase (RNAP) catalyzes the transcription of DNA into RNA using the four ribonucleoside triphosphates as substrates. The polypeptide is DNA-directed RNA polymerase subunit Rpo11 (Saccharolobus shibatae (strain ATCC 51178 / DSM 5389 / JCM 8931 / NBRC 15437 / B12) (Sulfolobus shibatae)).